The following is a 220-amino-acid chain: Ribosomal RNA large subunit methyltransferase E (220 aa).

Positions 60, 62, 92, 108, and 133 each coordinate S-adenosyl-L-methionine. Residue Lys-173 is the Proton acceptor of the active site.

Belongs to the class I-like SAM-binding methyltransferase superfamily. RNA methyltransferase RlmE family.

It localises to the cytoplasm. It carries out the reaction uridine(2552) in 23S rRNA + S-adenosyl-L-methionine = 2'-O-methyluridine(2552) in 23S rRNA + S-adenosyl-L-homocysteine + H(+). Functionally, specifically methylates the uridine in position 2552 of 23S rRNA at the 2'-O position of the ribose in the fully assembled 50S ribosomal subunit. The protein is Ribosomal RNA large subunit methyltransferase E of Paraburkholderia phymatum (strain DSM 17167 / CIP 108236 / LMG 21445 / STM815) (Burkholderia phymatum).